The following is a 231-amino-acid chain: Large ribosomal subunit protein uL3 (231 aa).

At Gln-151 the chain carries N5-methylglutamine.

Belongs to the universal ribosomal protein uL3 family. In terms of assembly, part of the 50S ribosomal subunit. Forms a cluster with proteins L14 and L19. Post-translationally, methylated by PrmB.

In terms of biological role, one of the primary rRNA binding proteins, it binds directly near the 3'-end of the 23S rRNA, where it nucleates assembly of the 50S subunit. The chain is Large ribosomal subunit protein uL3 from Ehrlichia canis (strain Jake).